A 202-amino-acid polypeptide reads, in one-letter code: LexA repressor (202 aa).

A DNA-binding region (H-T-H motif) is located at residues 28 to 48 (RAEIAQQLGFRSPNAAEEHLK). Active-site for autocatalytic cleavage activity residues include Ser119 and Lys156.

It belongs to the peptidase S24 family. In terms of assembly, homodimer.

The enzyme catalyses Hydrolysis of Ala-|-Gly bond in repressor LexA.. Represses a number of genes involved in the response to DNA damage (SOS response), including recA and lexA. Binds to the 16 bp palindromic sequence 5'-CTGTATATATATACAG-3'. In the presence of single-stranded DNA, RecA interacts with LexA causing an autocatalytic cleavage which disrupts the DNA-binding part of LexA, leading to derepression of the SOS regulon and eventually DNA repair. This Pectobacterium carotovorum subsp. carotovorum (Erwinia carotovora subsp. carotovora) protein is LexA repressor.